The following is a 650-amino-acid chain: Methionine--tRNA ligase (650 aa).

The 'HIGH' region signature appears at 11-21 (YYVNDIPHIGH). 4 residues coordinate Zn(2+): C126, C129, C147, and C150. The 'KMSKS' region signature appears at 301 to 305 (KMSKS). K304 contacts ATP. The segment at 513–535 (EKTEKAGEASPEKNEKEKKDAKE) is disordered. Residues 549 to 650 (DFKKVEIKVG…REKIAGSLIS (102 aa)) form the tRNA-binding domain.

It belongs to the class-I aminoacyl-tRNA synthetase family. MetG type 2A subfamily. As to quaternary structure, homodimer. Zn(2+) serves as cofactor.

The protein resides in the cytoplasm. The enzyme catalyses tRNA(Met) + L-methionine + ATP = L-methionyl-tRNA(Met) + AMP + diphosphate. Its function is as follows. Is required not only for elongation of protein synthesis but also for the initiation of all mRNA translation through initiator tRNA(fMet) aminoacylation. This Helicobacter pylori (strain ATCC 700392 / 26695) (Campylobacter pylori) protein is Methionine--tRNA ligase (metG).